Reading from the N-terminus, the 78-residue chain is UPF0291 protein SE_1024 (78 aa).

Residues 53 to 78 (TKVIDPEGNDVTPEKLKKIQEEKHNK) are disordered. A compositionally biased stretch (basic and acidic residues) spans 64–78 (TPEKLKKIQEEKHNK).

This sequence belongs to the UPF0291 family.

Its subcellular location is the cytoplasm. This chain is UPF0291 protein SE_1024, found in Staphylococcus epidermidis (strain ATCC 12228 / FDA PCI 1200).